The following is a 403-amino-acid chain: DNA replication and repair protein RecF (403 aa).

ATP is bound at residue Gly30–Thr37.

The protein belongs to the RecF family.

It localises to the cytoplasm. Functionally, the RecF protein is involved in DNA metabolism; it is required for DNA replication and normal SOS inducibility. RecF binds preferentially to single-stranded, linear DNA. It also seems to bind ATP. The protein is DNA replication and repair protein RecF of Bifidobacterium adolescentis (strain ATCC 15703 / DSM 20083 / NCTC 11814 / E194a).